We begin with the raw amino-acid sequence, 130 residues long: Large ribosomal subunit protein uL22 (130 aa).

Belongs to the universal ribosomal protein uL22 family. Part of the 50S ribosomal subunit.

Its function is as follows. This protein binds specifically to 23S rRNA; its binding is stimulated by other ribosomal proteins, e.g. L4, L17, and L20. It is important during the early stages of 50S assembly. It makes multiple contacts with different domains of the 23S rRNA in the assembled 50S subunit and ribosome. In terms of biological role, the globular domain of the protein is located near the polypeptide exit tunnel on the outside of the subunit, while an extended beta-hairpin is found that lines the wall of the exit tunnel in the center of the 70S ribosome. This is Large ribosomal subunit protein uL22 from Clavibacter sepedonicus (Clavibacter michiganensis subsp. sepedonicus).